The primary structure comprises 284 residues: Bifunctional protein FolD (284 aa).

NADP(+) contacts are provided by residues 165-167, Ser190, and Ile231; that span reads GRS.

This sequence belongs to the tetrahydrofolate dehydrogenase/cyclohydrolase family. As to quaternary structure, homodimer.

The catalysed reaction is (6R)-5,10-methylene-5,6,7,8-tetrahydrofolate + NADP(+) = (6R)-5,10-methenyltetrahydrofolate + NADPH. It carries out the reaction (6R)-5,10-methenyltetrahydrofolate + H2O = (6R)-10-formyltetrahydrofolate + H(+). Its pathway is one-carbon metabolism; tetrahydrofolate interconversion. Its function is as follows. Catalyzes the oxidation of 5,10-methylenetetrahydrofolate to 5,10-methenyltetrahydrofolate and then the hydrolysis of 5,10-methenyltetrahydrofolate to 10-formyltetrahydrofolate. The protein is Bifunctional protein FolD of Streptococcus thermophilus (strain CNRZ 1066).